The chain runs to 150 residues: Large ribosomal subunit protein uL15 (150 aa).

The disordered stretch occupies residues 1 to 55 (MADNEILQMHDLKPAPGAKKDRTRVGRGEGSKGKTSGRGAKGQTKRNHVRPGFEG). Basic and acidic residues predominate over residues 8–32 (QMHDLKPAPGAKKDRTRVGRGEGSK).

This sequence belongs to the universal ribosomal protein uL15 family. Part of the 50S ribosomal subunit.

In terms of biological role, binds to the 23S rRNA. This chain is Large ribosomal subunit protein uL15, found in Bifidobacterium longum (strain NCC 2705).